The primary structure comprises 359 residues: Methylthioribose-1-phosphate isomerase (359 aa).

The active-site Proton donor is Asp235.

This sequence belongs to the eIF-2B alpha/beta/delta subunits family. MtnA subfamily.

The protein resides in the cytoplasm. Its subcellular location is the nucleus. The catalysed reaction is 5-(methylsulfanyl)-alpha-D-ribose 1-phosphate = 5-(methylsulfanyl)-D-ribulose 1-phosphate. It functions in the pathway amino-acid biosynthesis; L-methionine biosynthesis via salvage pathway; L-methionine from S-methyl-5-thio-alpha-D-ribose 1-phosphate: step 1/6. Its function is as follows. Catalyzes the interconversion of methylthioribose-1-phosphate (MTR-1-P) into methylthioribulose-1-phosphate (MTRu-1-P). This is Methylthioribose-1-phosphate isomerase (mri1) from Schizosaccharomyces pombe (strain 972 / ATCC 24843) (Fission yeast).